The chain runs to 343 residues: MITLAVDCMGGDHGPGVTLPACRQFLEHHPDARLILVGGQDSLQGLVHERVTHVVASEVVTMDDAVEVALRRKKDSSMRVAIQQVKDGVAHAAISAGNTGALMAIARYLLKTLDGIDRPAIATQMPNAQGGATTVLDLGANVDCTAEHLLQFAVMGSALVSVLQDRDEPLVGLLNIGEEVIKGNDVIKKAGGLLRSAAKSGDLNFHGNVEGNDIFKGTVDIVVCDGFVGNVALKASEGVASMIAGALKQEFSRNIFTKIAAIVAYPVLSAIMKRMDHRRYNGAALLGLRGLVFKSHGSADALAFEQALIRAYDAARNNLLDRVRARVAHAAPLLAAADAQPAS.

The protein belongs to the PlsX family. As to quaternary structure, homodimer. Probably interacts with PlsY.

It is found in the cytoplasm. The enzyme catalyses a fatty acyl-[ACP] + phosphate = an acyl phosphate + holo-[ACP]. The protein operates within lipid metabolism; phospholipid metabolism. Its function is as follows. Catalyzes the reversible formation of acyl-phosphate (acyl-PO(4)) from acyl-[acyl-carrier-protein] (acyl-ACP). This enzyme utilizes acyl-ACP as fatty acyl donor, but not acyl-CoA. This chain is Phosphate acyltransferase, found in Acidovorax sp. (strain JS42).